Here is a 157-residue protein sequence, read N- to C-terminus: Nascent polypeptide-associated complex subunit alpha (157 aa).

Residues 6–71 (TTDESHIHKT…LGSPVNLHQL (66 aa)) form the NAC-A/B domain. The span at 81 to 107 (SSKDQEGPGLYDEIHSDPQEDGVKEAE) shows a compositional bias: basic and acidic residues. The segment at 81-116 (SSKDQEGPGLYDEIHSDPQEDGVKEAEEITVDPSDE) is disordered. Positions 118-157 (LSEEDIKLISSQVKASRNDIIKALVESEYDVVDAMMKLTK) constitute a UBA domain.

The protein belongs to the NAC-alpha family.

It localises to the cytoplasm. The protein localises to the nucleus. May be involved in mitochondrial protein import by enhancing productive ribosome interactions with the outer mitochondrial membrane and blocks the inappropriate interaction of ribosomes translating non-secretory nascent polypeptides with translocation sites in the membrane of the endoplasmic reticulum. EGD2 may also be involved in transcription regulation. This chain is Nascent polypeptide-associated complex subunit alpha (EGD2), found in Encephalitozoon cuniculi (strain GB-M1) (Microsporidian parasite).